The primary structure comprises 428 residues: Histidinol dehydrogenase (428 aa).

Substrate is bound by residues Ser-234, Gln-256, and His-259. 2 residues coordinate Zn(2+): Gln-256 and His-259. Active-site proton acceptor residues include Glu-323 and His-324. Residues His-324, Asp-357, Glu-411, and His-416 each contribute to the substrate site. Residue Asp-357 participates in Zn(2+) binding. His-416 provides a ligand contact to Zn(2+).

This sequence belongs to the histidinol dehydrogenase family. It depends on Zn(2+) as a cofactor.

It catalyses the reaction L-histidinol + 2 NAD(+) + H2O = L-histidine + 2 NADH + 3 H(+). Its pathway is amino-acid biosynthesis; L-histidine biosynthesis; L-histidine from 5-phospho-alpha-D-ribose 1-diphosphate: step 9/9. Catalyzes the sequential NAD-dependent oxidations of L-histidinol to L-histidinaldehyde and then to L-histidine. The protein is Histidinol dehydrogenase of Campylobacter jejuni subsp. jejuni serotype O:2 (strain ATCC 700819 / NCTC 11168).